The chain runs to 758 residues: 5-methyltetrahydropteroyltriglutamate--homocysteine methyltransferase (758 aa).

Residues 17–20 (RELK) and Lys117 each bind 5-methyltetrahydropteroyltri-L-glutamate. L-homocysteine is bound by residues 434-436 (IGS) and Glu487. L-methionine is bound by residues 434–436 (IGS) and Glu487. 5-methyltetrahydropteroyltri-L-glutamate-binding positions include 518–519 (RC) and Trp564. Asp602 contacts L-homocysteine. Position 602 (Asp602) interacts with L-methionine. 5-methyltetrahydropteroyltri-L-glutamate is bound at residue Glu608. 3 residues coordinate Zn(2+): His644, Cys646, and Glu668. His697 serves as the catalytic Proton donor. Position 729 (Cys729) interacts with Zn(2+).

The protein belongs to the vitamin-B12 independent methionine synthase family. Zn(2+) is required as a cofactor.

The catalysed reaction is 5-methyltetrahydropteroyltri-L-glutamate + L-homocysteine = tetrahydropteroyltri-L-glutamate + L-methionine. The protein operates within amino-acid biosynthesis; L-methionine biosynthesis via de novo pathway; L-methionine from L-homocysteine (MetE route): step 1/1. Catalyzes the transfer of a methyl group from 5-methyltetrahydrofolate to homocysteine resulting in methionine formation. In Serratia proteamaculans (strain 568), this protein is 5-methyltetrahydropteroyltriglutamate--homocysteine methyltransferase.